The sequence spans 924 residues: Nodulation receptor kinase (924 aa).

Residues 1-29 (MMELRVICIIRLVVACVLCLCIFIRSASS) form the signal peptide. The stretch at 361 to 382 (EVIQKMRKELLLQNQDNEALES) forms a coiled coil. LRR repeat units follow at residues 406 to 428 (VITKLDLSSSNLKGTIPSSVTEM), 430 to 452 (KLQILNLSHNHFDGYIPSFPPSS), 453 to 475 (LLISVDLSYNDLTGQLPESIISL), and 477 to 498 (HLNSLYFGCNQHMRDDDEAKLN). A helical membrane pass occupies residues 520 to 540 (FMIGAITSGSILITLAVVILF). The region spanning 595–872 (EKYKTLIGEG…IVRELEDALI (278 aa)) is the Protein kinase domain. Residues 601 to 609 (IGEGGFGSV) and K623 contribute to the ATP site. The Proton acceptor role is filled by D721.

Belongs to the protein kinase superfamily. Ser/Thr protein kinase family. In terms of processing, may be phosphorylated.

It localises to the membrane. It catalyses the reaction L-seryl-[protein] + ATP = O-phospho-L-seryl-[protein] + ADP + H(+). The enzyme catalyses L-threonyl-[protein] + ATP = O-phospho-L-threonyl-[protein] + ADP + H(+). In terms of biological role, involved in the perception of symbiotic fungi and bacteria and required for the calcium spiking. Part of the perception/transduction system leading to nodulation or mycorrhizal infection. This Pisum sativum (Garden pea) protein is Nodulation receptor kinase (NORK).